A 305-amino-acid chain; its full sequence is MYNGILPVYKERGLTSHDVVFKLRKILKTKKIGHTGTLDPEVAGVLPVCIGNATRVSDYVMDMGKAYEATVSIGRSTTTEDQTGDTLETKGVHSADFNKDDIDRLLESFKGIIEQIPPMYSSVKVNGKKLYEYARNNETVERPKRKVNIKDIGRISELDFKENECHFKIRVICGKGTYIRTLATDIGVKLGFPAHMSKLTRIESGGFVLKDSLTLEQIKELHEQDSLQNKLFPLEYGLKGLPSIKIKDSHIKKRILNGQKFNKNEFDNKIKDQIVFIDDDSEKVLAIYMVHPTKESEIKPKKVFN.

The Nucleophile role is filled by Asp-39.

Belongs to the pseudouridine synthase TruB family. Type 1 subfamily.

It carries out the reaction uridine(55) in tRNA = pseudouridine(55) in tRNA. Responsible for synthesis of pseudouridine from uracil-55 in the psi GC loop of transfer RNAs. This chain is tRNA pseudouridine synthase B, found in Staphylococcus aureus (strain Newman).